The following is a 2019-amino-acid chain: Sodium channel protein type 5 subunit alpha (2019 aa).

Over 1–129 the chain is Cytoplasmic; it reads MANFLLPRGT…VRRAAVKILV (129 aa). A disordered region spans residues 27–66; the sequence is RMAEKQARGSATSQESREGLPEEEAPRPQLDLQASKKLPD. Phosphoserine is present on S36. The residue at position 38 (T38) is a Phosphothreonine. Over residues 41-52 the composition is skewed to basic and acidic residues; the sequence is ESREGLPEEEAP. Residues 113–420 form an I repeat; the sequence is VLSPFHPVRR…VVAMAYEEQN (308 aa). Residues 130–149 form a helical membrane-spanning segment; sequence HSLFSMLIMCTILTNCVFMA. Residues 150 to 157 are Extracellular-facing; the sequence is QHDPPPWT. Residues 158-179 form a helical membrane-spanning segment; that stretch reads KYVEYTFTAIYTFESLVKILAR. Residues 180-188 are Cytoplasmic-facing; the sequence is GFCLHAFTF. The chain crosses the membrane as a helical span at residues 189-209; sequence LRDPWNWLDFSVIVMAYTTEF. The Extracellular portion of the chain corresponds to 210-216; it reads VDLGNVS. N214 carries an N-linked (GlcNAc...) asparagine glycan. A helical membrane pass occupies residues 217–236; sequence ALRTFRVLRALKTISVISGL. The Cytoplasmic segment spans residues 237–249; it reads KTIVGALIQSVKK. The chain crosses the membrane as a helical span at residues 250–272; that stretch reads LADVMVLTVFCLSVFALIGLQLF. Topologically, residues 273–357 are extracellular; it reads MGNLRHKCVR…PDHGYTSFDS (85 aa). A disulfide bond links C280 and C335. N-linked (GlcNAc...) asparagine glycans are attached at residues N283, N288, N291, N318, and N328. The segment at residues 358 to 378 is an intramembrane region (pore-forming); sequence FAWAFLALFRLMTQDCWERLY. Residues 379–386 lie on the Extracellular side of the membrane; that stretch reads QQTLRSAG. The chain crosses the membrane as a helical span at residues 387–413; that stretch reads KIYMIFFMLVIFLGSFYLVNLILAVVA. Topologically, residues 414-719 are cytoplasmic; it reads MAYEEQNQAT…VKFVVMDPFA (306 aa). Residues S457, S460, S483, and S484 each carry the phosphoserine modification. 2 disordered regions span residues 461–575 and 610–647; these read LEMS…TQGQ and EATS…TPQA. A Phosphothreonine modification is found at T486. Residues 491 to 503 are compositionally biased toward basic and acidic residues; sequence DDRLPKSDSEDGP. A phosphoserine mark is found at S497 and S510. A compositionally biased stretch (polar residues) spans 507 to 528; sequence NQLSLTHGLSRTSMRPRSSRGS. R526 carries the post-translational modification Dimethylated arginine; alternate. R526 bears the Omega-N-methylarginine; alternate mark. Phosphoserine is present on residues S539 and S571. S664 and S667 each carry phosphoserine. The II repeat unit spans residues 699-971; it reads CCPLWMSIKQ…QLALARIQRG (273 aa). Residues 720 to 737 traverse the membrane as a helical segment; the sequence is DLTITMCIVLNTLFMALE. Over 738–746 the chain is Extracellular; the sequence is HYNMTAEFE. N-linked (GlcNAc...) asparagine glycosylation occurs at N740. Residues 747–769 traverse the membrane as a helical segment; sequence EMLQVGNLVFTGIFTAEMTFKII. The Cytoplasmic segment spans residues 770–775; that stretch reads ALDPYY. Residues 776–796 form a helical membrane-spanning segment; that stretch reads YFQQGWNIFDSIIVILSLMEL. At 797-806 the chain is on the extracellular side; the sequence is GLSRMGNLSV. N803 is a glycosylation site (N-linked (GlcNAc...) asparagine). The chain crosses the membrane as a helical span at residues 807–821; sequence LRSFRLLRVFKLAKS. At 822–838 the chain is on the cytoplasmic side; that stretch reads WPTLNTLIKIIGNSVGA. A helical transmembrane segment spans residues 839-860; that stretch reads LGNLTLVLAIIVFIFAVVGMQL. Residues 861–886 lie on the Extracellular side of the membrane; that stretch reads FGKNYSELRHRISDSGLLPRWHMMDF. N-linked (GlcNAc...) asparagine glycosylation occurs at N864. Residues 887–905 constitute an intramembrane region (pore-forming); that stretch reads FHAFLIIFRILCGEWIETM. At 906–914 the chain is on the extracellular side; sequence WDCMEVSGQ. A disulfide bond links C908 and C917. Residues 915-943 form a helical membrane-spanning segment; it reads SLCLLVFLLVMVIGNLVVLNLFLALLLSS. Residues 944–1205 lie on the Cytoplasmic side of the membrane; that stretch reads FSADNLTAPD…LRKTCYRIVE (262 aa). Positions 1000–1144 are disordered; it reads HSQLPSCIAA…EDSYSEGSTA (145 aa). Residues 1017–1036 show a composition bias toward basic and acidic residues; the sequence is EVEKAPPARKETRFEEDKRP. Positions 1056 to 1075 are enriched in acidic residues; sequence SDTDDQEEDEENSLGTEEEE. Low complexity predominate over residues 1098-1115; the sequence is SQVSETTSSEAEASTSQA. The stretch at 1189 to 1503 is one III repeat; that stretch reads PGKVWWRLRK…KKYYNAMKKL (315 aa). Residues 1206 to 1227 traverse the membrane as a helical segment; sequence HSWFETFIIFMILLSSGALAFE. The Extracellular portion of the chain corresponds to 1228 to 1238; that stretch reads DIYLEERKTIK. A helical membrane pass occupies residues 1239–1261; it reads VLLEYADKMFTYVFVLEMLLKWV. At 1262 to 1270 the chain is on the cytoplasmic side; the sequence is AYGFKKYFT. A helical transmembrane segment spans residues 1271–1293; it reads NAWCWLDFLIVDVSLVSLVANTL. Topologically, residues 1294–1299 are extracellular; it reads GFAEMG. A helical membrane pass occupies residues 1300–1319; that stretch reads PIKSLRTLRALRPLRALSRF. Residues 1320–1332 are Cytoplasmic-facing; the sequence is EGMRVVVNALVGA. The chain crosses the membrane as a helical span at residues 1333–1357; the sequence is IPSIMNVLLVCLIFWLIFSIMGVNL. Topologically, residues 1358–1402 are extracellular; that stretch reads FAGKFGRCINQTEGDLPLNYTIVNNKSECESFNVTGELYWTKVKV. N-linked (GlcNAc...) asparagine glycans are attached at residues N1367, N1376, N1382, and N1390. Positions 1403–1424 form an intramembrane region, pore-forming; the sequence is NFDNVGAGYLALLQVATFKGWM. At 1425–1447 the chain is on the extracellular side; that stretch reads DIMYAAVDSRGYEEQPQWEDNLY. Residues 1448–1472 form a helical membrane-spanning segment; that stretch reads MYIYFVVFIIFGSFFTLNLFIGVII. Over 1473–1530 the chain is Cytoplasmic; it reads DNFNQQKKKLGGQDIFMTEEQKKYYNAMKKLGSKKPQKPIPRPLNKYQGFIFDIVTKQ. Position 1505 is a phosphoserine; by PKC (S1505). One copy of the IV repeat lies at 1512 to 1809; it reads IPRPLNKYQG…WEKFDPEATQ (298 aa). A helical transmembrane segment spans residues 1531-1549; sequence AFDVTIMFLICLNMVTMMV. Topologically, residues 1550-1560 are extracellular; it reads ETDDQSPEKVN. The chain crosses the membrane as a helical span at residues 1561–1582; that stretch reads ILAKINLLFVAIFTGECIVKMA. Residues 1583–1591 are Cytoplasmic-facing; that stretch reads ALRHYYFTN. Residues 1592–1614 form a helical membrane-spanning segment; sequence SWNIFDFVVVILSIVGTVLSDII. The Extracellular portion of the chain corresponds to 1615–1621; sequence QKYFFSP. The chain crosses the membrane as a helical span at residues 1622–1642; the sequence is TLFRVIRLARIGRILRLIRGA. The Cytoplasmic segment spans residues 1643 to 1652; it reads KGIRTLLFAL. The chain crosses the membrane as a helical span at residues 1653 to 1681; it reads MMSLPALFNIGLLLFLVMFIYSIFGMANF. Over 1682–1699 the chain is Extracellular; that stretch reads AYVKWEAGIDDMFNFQTF. Residues 1700–1716 constitute an intramembrane region (pore-forming); the sequence is ANSMLCLFQITTSAGWD. The Extracellular segment spans residues 1717 to 1747; that stretch reads GLLSPILNTGPPYCDPNLPNSNGSRGNCGSP. Residues 1748-1773 traverse the membrane as a helical segment; the sequence is AVGILFFTTYIIISFLIVVNMYIAII. Over 1774–2019 the chain is Cytoplasmic; that stretch reads LENFSVATEE…SPDRDRESIV (246 aa). The interaction with FGF13 stretch occupies residues 1841–1903; that stretch reads DLPMVSGDRI…ITTTLRRKHE (63 aa). The 30-residue stretch at 1903–1932 folds into the IQ domain; sequence EEVSATVIQRAFRRHLLQRSVKHASFLFRQ. Over residues 1963 to 1982 the composition is skewed to low complexity; that stretch reads SGPLSSSSISSTSFPPSYDS. A disordered region spans residues 1963-2019; sequence SGPLSSSSISSTSFPPSYDSVTRATSDNLPVRASDYSRSEDLADFPPSPDRDRESIV. Residues 1977-1980 are interaction with NEDD4, NEDD4L and WWP2; it reads PPSY.

The protein belongs to the sodium channel (TC 1.A.1.10) family. Nav1.5/SCN5A subfamily. As to quaternary structure, cannot form the same regulatory interactions with beta subunits as other Navs do. Interacts with the PDZ domain of the syntrophin SNTA1, SNTB1 and SNTB2. Interacts with NEDD4, NEDD4L, WWP2 and GPD1L. Interacts with CALM. Interacts with FGF13; the interaction is direct and may regulate SNC5A density at membranes and function. Interacts with FGF12 and FGF14. Interacts with ANK3. Interacts with PKP2 (via N-terminus). Interacts with TMEM233. Interacts with XIRP2; the interaction is required for normal action potential configuration in the heart. In terms of processing, phosphorylation at Ser-1505 by PKC in a highly conserved cytoplasmic loop slows inactivation of the sodium channel and reduces peak sodium currents. Regulated through phosphorylation by CaMK2D. Ubiquitinated by NEDD4L; which promotes its endocytosis. Does not seem to be ubiquitinated by NEDD4 or WWP2. Post-translationally, lacks the cysteine which covalently binds the conotoxin GVIIJ. This cysteine (position 868) is speculated in other sodium channel subunits alpha to be implied in covalent binding with the sodium channel subunit beta-2 or beta-4. In terms of processing, N-glycosylated at Asn-318, probably hinders potential interaction with regulatory subunits. Expressed in the myocardium (at protein level).

Its subcellular location is the cell membrane. The protein localises to the cytoplasm. It localises to the perinuclear region. It is found in the sarcolemma. The protein resides in the T-tubule. Its subcellular location is the cell junction. The enzyme catalyses Na(+)(in) = Na(+)(out). Its activity is regulated as follows. Channel inactivation is regulated by intracellular calcium levels. It is a tetrodotoxin-resistant voltage-gated Na(+) channel (Nav). Functionally, pore-forming subunit of Nav1.5, a voltage-gated sodium (Nav) channel that directly mediates the depolarizing phase of action potentials in excitable membranes. Navs, also called VGSCs (voltage-gated sodium channels) or VDSCs (voltage-dependent sodium channels), operate by switching between closed and open conformations depending on the voltage difference across the membrane. In the open conformation they allow Na(+) ions to selectively pass through the pore, along their electrochemical gradient. The influx of Na(+) ions provokes membrane depolarization, initiating the propagation of electrical signals throughout cells and tissues. Nav1.5 is the predominant sodium channel expressed in myocardial cells and it is responsible for the initial upstroke of the action potential in cardiac myocytes, thereby initiating the heartbeat. Required for normal electrical conduction including formation of the infranodal ventricular conduction system and normal action potential configuration, as a result of its interaction with XIRP2. In Mus musculus (Mouse), this protein is Sodium channel protein type 5 subunit alpha.